A 261-amino-acid polypeptide reads, in one-letter code: Type III pantothenate kinase (261 aa).

6–13 is an ATP binding site; sequence DAGNTNVV. Residue 108 to 111 coordinates substrate; the sequence is GADR. Asp110 functions as the Proton acceptor in the catalytic mechanism. Asp130 contacts K(+). Thr133 provides a ligand contact to ATP. Substrate is bound at residue Thr185.

This sequence belongs to the type III pantothenate kinase family. As to quaternary structure, homodimer. Requires NH4(+) as cofactor. K(+) is required as a cofactor.

It is found in the cytoplasm. The catalysed reaction is (R)-pantothenate + ATP = (R)-4'-phosphopantothenate + ADP + H(+). It functions in the pathway cofactor biosynthesis; coenzyme A biosynthesis; CoA from (R)-pantothenate: step 1/5. In terms of biological role, catalyzes the phosphorylation of pantothenate (Pan), the first step in CoA biosynthesis. This is Type III pantothenate kinase from Rhodospirillum centenum (strain ATCC 51521 / SW).